The sequence spans 164 residues: MKVASSSAAATAGPSCSLKAGRTAGEVVLGLSEQSVAISRCAGTRLPALLDEQQVNVLLYDMNGCYSRLKELVPTLPQNRKVSKVEILQHVIDYIRDLQLELNSESEVATAGGRGLPVRAPLSTLNGEISALAAEVRSESEYYIILLWETKATGGGCPPYFSGA.

One can recognise a bHLH domain in the interval 46 to 98 (LPALLDEQQVNVLLYDMNGCYSRLKELVPTLPQNRKVSKVEILQHVIDYIRDL). A Nuclear export signal motif is present at residues 91 to 104 (VIDYIRDLQLELNS).

In terms of assembly, heterodimer with other HLH proteins. Interacts with COPS5, IFI204, GATA4, NKX2-5, CLOCK and BMAL1. Isoform Short can form homodimers. In terms of processing, phosphorylated in vitro by PKA and PKC.

It localises to the cytoplasm. It is found in the nucleus. Transcriptional regulator (lacking a basic DNA binding domain) which negatively regulates the basic helix-loop-helix (bHLH) transcription factors by forming heterodimers and inhibiting their DNA binding and transcriptional activity. Implicated in regulating a variety of cellular processes, including cellular growth, senescence, differentiation, apoptosis, angiogenesis, and neoplastic transformation. Inhibits skeletal muscle and cardiac myocyte differentiation. Regulates the circadian clock by repressing the transcriptional activator activity of the CLOCK-BMAL1 heterodimer. This chain is DNA-binding protein inhibitor ID-1 (Id1), found in Rattus norvegicus (Rat).